We begin with the raw amino-acid sequence, 183 residues long: Large ribosomal subunit protein eL18 (183 aa).

Residues 150–183 (RHFGPAPGAPRSHTKPYVRTKGHERARPRRRSNV) are disordered. Basic residues predominate over residues 161 to 183 (SHTKPYVRTKGHERARPRRRSNV).

Belongs to the eukaryotic ribosomal protein eL18 family.

The protein resides in the cytoplasm. In Spodoptera frugiperda (Fall armyworm), this protein is Large ribosomal subunit protein eL18 (RpL18).